A 311-amino-acid polypeptide reads, in one-letter code: Cytosolic Fe-S cluster assembly factor Nubp1 homolog (311 aa).

Positions 1-21 are disordered; it reads MQAPPPEHCPGVESEEAGKGS. [4Fe-4S] cluster is bound by residues cysteine 9, cysteine 23, cysteine 26, and cysteine 32. 63–70 provides a ligand contact to ATP; the sequence is GKGGVGKS. [4Fe-4S] cluster-binding residues include cysteine 240 and cysteine 243.

It belongs to the Mrp/NBP35 ATP-binding proteins family. NUBP1/NBP35 subfamily. Heterotetramer of 2 Nubp1 and 2 Nubp2 chains. [4Fe-4S] cluster is required as a cofactor.

It is found in the cytoplasm. Component of the cytosolic iron-sulfur (Fe/S) protein assembly (CIA) machinery. Required for maturation of extramitochondrial Fe-S proteins. The Nubp1-Nubp2 heterotetramer forms a Fe-S scaffold complex, mediating the de novo assembly of an Fe-S cluster and its transfer to target apoproteins. In Drosophila melanogaster (Fruit fly), this protein is Cytosolic Fe-S cluster assembly factor Nubp1 homolog.